We begin with the raw amino-acid sequence, 74 residues long: Tetrahydromethanopterin S-methyltransferase subunit G (74 aa).

The helical transmembrane segment at 50–70 (IGILYGLVIGLYLCMLYILLG) threads the bilayer.

Belongs to the MtrG family. As to quaternary structure, the complex is composed of 8 subunits; MtrA, MtrB, MtrC, MtrD, MtrE, MtrF, MtrG and MtrH.

Its subcellular location is the cell membrane. It catalyses the reaction 5-methyl-5,6,7,8-tetrahydromethanopterin + coenzyme M + 2 Na(+)(in) = 5,6,7,8-tetrahydromethanopterin + methyl-coenzyme M + 2 Na(+)(out). The protein operates within one-carbon metabolism; methanogenesis from CO(2); methyl-coenzyme M from 5,10-methylene-5,6,7,8-tetrahydromethanopterin: step 2/2. In terms of biological role, part of a complex that catalyzes the formation of methyl-coenzyme M and tetrahydromethanopterin from coenzyme M and methyl-tetrahydromethanopterin. This is an energy-conserving, sodium-ion translocating step. The sequence is that of Tetrahydromethanopterin S-methyltransferase subunit G from Methanopyrus kandleri (strain AV19 / DSM 6324 / JCM 9639 / NBRC 100938).